We begin with the raw amino-acid sequence, 233 residues long: Phosphoribosylaminoimidazole-succinocarboxamide synthase (233 aa).

The protein belongs to the SAICAR synthetase family.

The enzyme catalyses 5-amino-1-(5-phospho-D-ribosyl)imidazole-4-carboxylate + L-aspartate + ATP = (2S)-2-[5-amino-1-(5-phospho-beta-D-ribosyl)imidazole-4-carboxamido]succinate + ADP + phosphate + 2 H(+). The protein operates within purine metabolism; IMP biosynthesis via de novo pathway; 5-amino-1-(5-phospho-D-ribosyl)imidazole-4-carboxamide from 5-amino-1-(5-phospho-D-ribosyl)imidazole-4-carboxylate: step 1/2. The chain is Phosphoribosylaminoimidazole-succinocarboxamide synthase from Staphylococcus saprophyticus subsp. saprophyticus (strain ATCC 15305 / DSM 20229 / NCIMB 8711 / NCTC 7292 / S-41).